We begin with the raw amino-acid sequence, 187 residues long: UPF0200 protein APE_1753.1 (187 aa).

13–20 (GLPGSGKS) contacts ATP.

It belongs to the UPF0200 family.

In Aeropyrum pernix (strain ATCC 700893 / DSM 11879 / JCM 9820 / NBRC 100138 / K1), this protein is UPF0200 protein APE_1753.1.